The chain runs to 664 residues: MPSRKHLANAIRALSMDGVQKANSGHPGAPMGMADIAEVLWRGHLNHNPSNPEWADRDRFVLSNGHGSMLIYSLLHLSGYELSIDDLKNFRQLHSKTPGHPEYGYAPGIETTTGPLGQGITNAVGMAMAEKALAAQFNKPGHDIVDHFTYVFMGDGCLMEGISHEACSLAGTLGLGKLIAFWDDNGISIDGHVEGWFSDDTPKRFEAYGWHVIPAVDGHNAEAINAAIEAAKADPRPTLICTKTIIGFGSPNKSGSHDCHGAPLGAEEIAAAREFLGWEHPAFEIPADVYAEWDAKAAGAEKEAAWNAKFDAYAAAYPTEAAELKRRLNGELPAEWEEKANQIIADLQANPANIASRKASQNALEAFGKMLPEFMGGSADLAPSNLTMWSGSKSLEANDFSGNYIHYGVREFGMTAIMNGIALHGGFVPYGATFLMFMEYARNAMRMAALMKVQNIQVYTHDSIGLGEDGPTHQPVEQIASLRLTPNMSTWRPCDQVESAVAWKLAIERKDGPSALIFSRQNLAQQPRSAEQVADIAKGGYILKDSDGKPELILIATGSEVELAVKAAEQLTAEGKKVRVVSMPATDTFDKQDAAYREAVLPSDVTARIAIEAGIADFWYKYVGFDGRIIGMTTFGESAPADQLFEMFGFTVENVVNTAKELLA.

Substrate is bound at residue His26. Residues His66 and 114 to 116 each bind thiamine diphosphate; that span reads GPL. Asp155 provides a ligand contact to Mg(2+). 2 residues coordinate thiamine diphosphate: Gly156 and Asn185. Positions 185 and 187 each coordinate Mg(2+). Residues His260, Arg357, and Ser384 each coordinate substrate. His260 lines the thiamine diphosphate pocket. Glu411 acts as the Proton donor in catalysis. Phe437 contacts thiamine diphosphate. Residues His461, Asp469, and Arg520 each coordinate substrate.

This sequence belongs to the transketolase family. Homodimer. It depends on Mg(2+) as a cofactor. Requires Ca(2+) as cofactor. Mn(2+) serves as cofactor. The cofactor is Co(2+). Thiamine diphosphate is required as a cofactor.

The enzyme catalyses D-sedoheptulose 7-phosphate + D-glyceraldehyde 3-phosphate = aldehydo-D-ribose 5-phosphate + D-xylulose 5-phosphate. Functionally, catalyzes the transfer of a two-carbon ketol group from a ketose donor to an aldose acceptor, via a covalent intermediate with the cofactor thiamine pyrophosphate. This chain is Transketolase 1 (tkt1), found in Vibrio vulnificus (strain CMCP6).